The sequence spans 284 residues: Bifunctional protein FolD (284 aa).

NADP(+) is bound by residues 166-168 and isoleucine 232; that span reads GAS.

The protein belongs to the tetrahydrofolate dehydrogenase/cyclohydrolase family. Homodimer.

It carries out the reaction (6R)-5,10-methylene-5,6,7,8-tetrahydrofolate + NADP(+) = (6R)-5,10-methenyltetrahydrofolate + NADPH. The catalysed reaction is (6R)-5,10-methenyltetrahydrofolate + H2O = (6R)-10-formyltetrahydrofolate + H(+). It functions in the pathway one-carbon metabolism; tetrahydrofolate interconversion. Its function is as follows. Catalyzes the oxidation of 5,10-methylenetetrahydrofolate to 5,10-methenyltetrahydrofolate and then the hydrolysis of 5,10-methenyltetrahydrofolate to 10-formyltetrahydrofolate. The polypeptide is Bifunctional protein FolD (Shewanella sp. (strain ANA-3)).